The primary structure comprises 909 residues: Golgin subfamily A member 6-like protein 2 (909 aa).

Pro residues predominate over residues 1-11 (MWPQPHLPPHP). Disordered stretches follow at residues 1–88 (MWPQ…ASHQ), 300–362 (ERLR…EQEE), 381–408 (QEKQMREQEQKMRDQEERMWEQDERLRE), 425–494 (KMRE…QRLP), and 524–909 (EEMW…QSSL). Residues 13 to 31 (MSEKTRQNKLAEAKKKFTD) show a composition bias toward basic and acidic residues. Over residues 53–77 (NNGTNPETTTSEGCHSPEDTQQNRA) the composition is skewed to polar residues. A compositionally biased stretch (basic and acidic residues) spans 78-88 (QLKEEKKASHQ). The stretch at 192–526 (HKKADRYIEE…EEKIRDQEEM (335 aa)) forms a coiled coil. Composition is skewed to basic and acidic residues over residues 425–478 (KMRE…KQEE) and 524–542 (EEMWGQEKKMWRQEKMREQ). Acidic residues predominate over residues 607-620 (AGGEEDAGAGEEDM). 2 stretches are compositionally biased toward gly residues: residues 641 to 654 (GGGGDDAGAGGEDA) and 676 to 689 (GAGGEDVGAGGEDV). The segment covering 692 to 719 (GRRRCGSSRGCRNRRRSCGNTRRCRSRR) has biased composition (basic residues). Positions 746–755 (AGAEDVAAGG) are enriched in low complexity. The span at 757 to 766 (DAGEEEDAGG) shows a compositional bias: acidic residues. Positions 791–871 (GAGGEDVGAG…AGGEDVGAGG (81 aa)) are enriched in gly residues. The segment covering 872–892 (DAREGGEDTRSEREDAGEAAR) has biased composition (basic and acidic residues).

It belongs to the GOLGA6 family.

The chain is Golgin subfamily A member 6-like protein 2 (GOLGA6L2) from Homo sapiens (Human).